We begin with the raw amino-acid sequence, 216 residues long: Protein YabP (216 aa).

This chain is Protein YabP (yabP), found in Escherichia coli (strain K12).